A 480-amino-acid chain; its full sequence is UDP-N-acetylmuramate--L-alanine ligase (480 aa).

122-128 is a binding site for ATP; the sequence is GTHGKTT.

This sequence belongs to the MurCDEF family.

Its subcellular location is the cytoplasm. The catalysed reaction is UDP-N-acetyl-alpha-D-muramate + L-alanine + ATP = UDP-N-acetyl-alpha-D-muramoyl-L-alanine + ADP + phosphate + H(+). Its pathway is cell wall biogenesis; peptidoglycan biosynthesis. In terms of biological role, cell wall formation. The chain is UDP-N-acetylmuramate--L-alanine ligase from Pseudomonas paraeruginosa (strain DSM 24068 / PA7) (Pseudomonas aeruginosa (strain PA7)).